A 212-amino-acid chain; its full sequence is Glycerol-3-phosphate acyltransferase (212 aa).

6 helical membrane passes run 8 to 28, 59 to 79, 90 to 110, 122 to 142, 148 to 168, and 169 to 189; these read IFLS…PFAV, AAAA…LWLA, VFAL…FLGF, ILLA…VIIA, SSLA…FGSG, and VAWY…LLLF.

Belongs to the PlsY family. Probably interacts with PlsX.

It localises to the cell inner membrane. It carries out the reaction an acyl phosphate + sn-glycerol 3-phosphate = a 1-acyl-sn-glycero-3-phosphate + phosphate. Its pathway is lipid metabolism; phospholipid metabolism. Its function is as follows. Catalyzes the transfer of an acyl group from acyl-phosphate (acyl-PO(4)) to glycerol-3-phosphate (G3P) to form lysophosphatidic acid (LPA). This enzyme utilizes acyl-phosphate as fatty acyl donor, but not acyl-CoA or acyl-ACP. The sequence is that of Glycerol-3-phosphate acyltransferase from Bordetella petrii (strain ATCC BAA-461 / DSM 12804 / CCUG 43448).